We begin with the raw amino-acid sequence, 306 residues long: 4-hydroxybenzoate geranyltransferase 2 (306 aa).

Transmembrane regions (helical) follow at residues Ile38–Gly58, Pro61–Ile81, Leu119–Val139, Ile153–Ser173, Gly178–Val198, Ile229–Val249, Ile251–Phe271, and Phe285–Phe305.

The protein belongs to the UbiA prenyltransferase family. Mg(2+) serves as cofactor. In terms of tissue distribution, expressed only in roots.

It is found in the endoplasmic reticulum membrane. It carries out the reaction 4-hydroxybenzoate + (2E)-geranyl diphosphate = 3-geranyl-4-hydroxybenzoate + diphosphate. Its function is as follows. Prenyltransferase involved in the biosynthesis of shikonin, a naphthoquinone secondary metabolite. Could accept only geranyl diphosphate and not dimethylallyl diphosphate, farnesyl diphosphate, or geranylgeranyl diphosphate as substrate. This Lithospermum erythrorhizon (Purple gromwell) protein is 4-hydroxybenzoate geranyltransferase 2 (PGT-2).